The sequence spans 376 residues: tRNA-specific 2-thiouridylase MnmA (376 aa).

ATP-binding positions include Gly14 to Ser21 and Met40. An interaction with target base in tRNA region spans residues Asn100–Asp102. Cys105 functions as the Nucleophile in the catalytic mechanism. The cysteines at positions 105 and 202 are disulfide-linked. Residue Gly129 coordinates ATP. Positions Lys152–Gln154 are interaction with tRNA. Cys202 serves as the catalytic Cysteine persulfide intermediate. An interaction with tRNA region spans residues Arg315–Tyr316.

The protein belongs to the MnmA/TRMU family.

It is found in the cytoplasm. It carries out the reaction S-sulfanyl-L-cysteinyl-[protein] + uridine(34) in tRNA + AH2 + ATP = 2-thiouridine(34) in tRNA + L-cysteinyl-[protein] + A + AMP + diphosphate + H(+). In terms of biological role, catalyzes the 2-thiolation of uridine at the wobble position (U34) of tRNA, leading to the formation of s(2)U34. In Lactococcus lactis subsp. cremoris (strain SK11), this protein is tRNA-specific 2-thiouridylase MnmA.